Here is a 232-residue protein sequence, read N- to C-terminus: Orotidine 5'-phosphate decarboxylase (232 aa).

Residues Asp11, Lys33, Asp61–Thr70, Thr116, Arg179, Gln188, Gly208, and Arg209 each bind substrate. Lys63 functions as the Proton donor in the catalytic mechanism.

The protein belongs to the OMP decarboxylase family. Type 1 subfamily. Homodimer.

The enzyme catalyses orotidine 5'-phosphate + H(+) = UMP + CO2. It functions in the pathway pyrimidine metabolism; UMP biosynthesis via de novo pathway; UMP from orotate: step 2/2. In terms of biological role, catalyzes the decarboxylation of orotidine 5'-monophosphate (OMP) to uridine 5'-monophosphate (UMP). This is Orotidine 5'-phosphate decarboxylase from Cereibacter sphaeroides (strain ATCC 17023 / DSM 158 / JCM 6121 / CCUG 31486 / LMG 2827 / NBRC 12203 / NCIMB 8253 / ATH 2.4.1.) (Rhodobacter sphaeroides).